We begin with the raw amino-acid sequence, 173 residues long: Photosystem I assembly protein Ycf3 (173 aa).

TPR repeat units lie at residues 35-68 (AFSY…EIDP), 72-105 (SYIL…NPSL), and 120-153 (GEQA…APNS).

Belongs to the Ycf3 family.

It localises to the plastid. The protein resides in the chloroplast thylakoid membrane. In terms of biological role, essential for the assembly of the photosystem I (PSI) complex. May act as a chaperone-like factor to guide the assembly of the PSI subunits. The protein is Photosystem I assembly protein Ycf3 of Mesostigma viride (Green alga).